Consider the following 338-residue polypeptide: Glycerol-3-phosphate dehydrogenase [NAD(P)+] (338 aa).

The NADPH site is built by Ser13, Trp14, and Lys108. Positions 108, 139, and 141 each coordinate sn-glycerol 3-phosphate. Position 143 (Ala143) interacts with NADPH. Sn-glycerol 3-phosphate is bound by residues Lys194, Asp247, Ser257, Arg258, and Asn259. The active-site Proton acceptor is the Lys194. Arg258 contributes to the NADPH binding site. NADPH-binding residues include Val282 and Glu284.

This sequence belongs to the NAD-dependent glycerol-3-phosphate dehydrogenase family.

The protein localises to the cytoplasm. The catalysed reaction is sn-glycerol 3-phosphate + NAD(+) = dihydroxyacetone phosphate + NADH + H(+). The enzyme catalyses sn-glycerol 3-phosphate + NADP(+) = dihydroxyacetone phosphate + NADPH + H(+). The protein operates within membrane lipid metabolism; glycerophospholipid metabolism. Functionally, catalyzes the reduction of the glycolytic intermediate dihydroxyacetone phosphate (DHAP) to sn-glycerol 3-phosphate (G3P), the key precursor for phospholipid synthesis. The protein is Glycerol-3-phosphate dehydrogenase [NAD(P)+] of Streptococcus agalactiae serotype III (strain NEM316).